Reading from the N-terminus, the 959-residue chain is Kinesin-like protein NACK1 (959 aa).

Positions 1–28 are disordered; the sequence is MTVRTPGTPASKIDKTPATTPNGHRGRE. The region spanning 30–353 is the Kinesin motor domain; it reads KIVVTVRLRP…LYFATRAKEV (324 aa). Residue 117–124 coordinates ATP; the sequence is GQTSSGKT. Thr-145 is modified (phosphothreonine). A coiled-coil region spans residues 362 to 429; that stretch reads VVSDKQLVKH…LRRKLQEEQG (68 aa). Disordered stretches follow at residues 417–438, 451–473, 598–640, and 658–700; these read VDELRRKLQEEQGPKPSESVSP, SPNLEEKAPVRSERTRNTMGRQS, LPSN…FLKS, and NRAP…SVNM. 2 stretches are compositionally biased toward basic and acidic residues: residues 418–429 and 454–466; these read DELRRKLQEEQG and LEEKAPVRSERTR. Positions 557–598 form a coiled coil; the sequence is KSVSANLKEEIARLHSQGSTIADLEEQLENVQKSLDKLVMSL. The span at 600-611 shows a compositional bias: low complexity; it reads SNNDQQSNNDTT. Positions 613-623 are enriched in basic residues; the sequence is KAKHPSKKKKL. Residues 630-640 are compositionally biased toward polar residues; the sequence is NSINRQNFLKS. Phosphothreonine is present on residues Thr-675 and Thr-690. The segment at 685–756 is required for the binding to NPK1; sequence SSKEGTPYRR…EANEAAGYNL (72 aa).

Belongs to the TRAFAC class myosin-kinesin ATPase superfamily. Kinesin family. KIN-7 subfamily. In terms of assembly, interacts (via C-terminus) with NPK1 (via C-terminus). Phosphorylated at Thr-145, Thr-675 and Thr-690 by CDKAs and CDKBs. The phosphorylation occurs before metaphase and inhibits the interaction with NPK1 preventing the transition to cytokinesis.

The protein resides in the cytoplasm. It is found in the nucleus. The protein localises to the cytoskeleton. It localises to the phragmoplast. Probable plus end-directed motor protein that functions in the NACK-PQR (NPK1-NQK1/MEK1-NRK1) MAP kinase signaling pathway, which is essential for somatic cell cytokinesis, especially for the cell-plate formation and its expansion. Regulates the activity and the localization of NPK1 by association through the non-catalytic region of the kinase. The protein is Kinesin-like protein NACK1 (NACK1) of Nicotiana tabacum (Common tobacco).